Reading from the N-terminus, the 199-residue chain is VAMP-like protein YKT61 (199 aa).

The 127-residue stretch at 7-133 (LVLKCAPEAS…LTEALNKFQD (127 aa)) folds into the Longin domain. The region spanning 139–199 (KLLKIQRELD…KKTNSCCTIL (61 aa)) is the v-SNARE coiled-coil homology domain. Residue Cys195 is the site of S-palmitoyl cysteine attachment. Position 196 is a cysteine methyl ester (Cys196). Cys196 is lipidated: S-geranylgeranyl cysteine. A propeptide spans 197-199 (TIL) (removed in mature form).

The protein belongs to the synaptobrevin family. Interacts with SYP41. Core constituent of the SNARE complex required for membrane fusion at the trans-Golgi network. In terms of tissue distribution, expressed ubiquitously in roots, stems, flowers and leaves.

It is found in the cell membrane. Functionally, may be involved in the secretory pathway. Essential for membrane fusion mediated by either SYP41 or SYP61; triggers the fusion of phospholipid vesicles containing SYP41 or SYP61 and VTI12. This is VAMP-like protein YKT61 from Arabidopsis thaliana (Mouse-ear cress).